We begin with the raw amino-acid sequence, 515 residues long: 2-isopropylmalate synthase (515 aa).

The 264-residue stretch at Leu-5–Val-268 folds into the Pyruvate carboxyltransferase domain. Residues Asp-14, His-202, His-204, and Asn-239 each contribute to the Mn(2+) site. The regulatory domain stretch occupies residues Lys-396–Ala-515.

This sequence belongs to the alpha-IPM synthase/homocitrate synthase family. LeuA type 1 subfamily. As to quaternary structure, homodimer. Requires Mn(2+) as cofactor.

Its subcellular location is the cytoplasm. It catalyses the reaction 3-methyl-2-oxobutanoate + acetyl-CoA + H2O = (2S)-2-isopropylmalate + CoA + H(+). It participates in amino-acid biosynthesis; L-leucine biosynthesis; L-leucine from 3-methyl-2-oxobutanoate: step 1/4. In terms of biological role, catalyzes the condensation of the acetyl group of acetyl-CoA with 3-methyl-2-oxobutanoate (2-ketoisovalerate) to form 3-carboxy-3-hydroxy-4-methylpentanoate (2-isopropylmalate). The protein is 2-isopropylmalate synthase of Burkholderia pseudomallei (strain 1106a).